The primary structure comprises 323 residues: Pyruvate dehydrogenase E1 component subunit beta (323 aa).

E60 lines the thiamine diphosphate pocket. K(+) contacts are provided by I113, A161, I162, D164, and N166.

Heterodimer of an alpha and a beta chain. Requires thiamine diphosphate as cofactor.

It localises to the plastid. The protein localises to the chloroplast. The catalysed reaction is N(6)-[(R)-lipoyl]-L-lysyl-[protein] + pyruvate + H(+) = N(6)-[(R)-S(8)-acetyldihydrolipoyl]-L-lysyl-[protein] + CO2. Functionally, the pyruvate dehydrogenase complex catalyzes the overall conversion of pyruvate to acetyl-CoA and CO(2). It contains multiple copies of three enzymatic components: pyruvate dehydrogenase (E1), dihydrolipoamide acetyltransferase (E2) and lipoamide dehydrogenase (E3). In Gracilaria tenuistipitata var. liui (Red alga), this protein is Pyruvate dehydrogenase E1 component subunit beta (pdhB).